The following is a 313-amino-acid chain: Homoserine kinase (313 aa).

92–102 (PPGRGLGSSGA) lines the ATP pocket.

It belongs to the GHMP kinase family. Homoserine kinase subfamily.

It is found in the cytoplasm. The enzyme catalyses L-homoserine + ATP = O-phospho-L-homoserine + ADP + H(+). Its pathway is amino-acid biosynthesis; L-threonine biosynthesis; L-threonine from L-aspartate: step 4/5. Functionally, catalyzes the ATP-dependent phosphorylation of L-homoserine to L-homoserine phosphate. This Aeropyrum pernix (strain ATCC 700893 / DSM 11879 / JCM 9820 / NBRC 100138 / K1) protein is Homoserine kinase.